We begin with the raw amino-acid sequence, 454 residues long: GTPase Obg (454 aa).

The 158-residue stretch at 2–159 folds into the Obg domain; the sequence is SDFVDEAVLH…VDIRLELKTI (158 aa). Positions 60–87 are disordered; the sequence is YQRRPHRKAENGAPGQGSNRSGASGADL. Residues 160-335 enclose the OBG-type G domain; the sequence is ADVGLVGFPS…LAYALGEQVA (176 aa). GTP contacts are provided by residues 166-173, 191-195, 212-215, 287-290, and 316-318; these read GFPSAGKS, FTTLV, DVPG, NKID, and SAA. Mg(2+) contacts are provided by Ser173 and Thr193. The OCT domain maps to 353–435; that stretch reads PREIGEIPFQ…DNPVVFDWDP (83 aa).

The protein belongs to the TRAFAC class OBG-HflX-like GTPase superfamily. OBG GTPase family. Monomer. It depends on Mg(2+) as a cofactor.

The protein localises to the cytoplasm. Its function is as follows. An essential GTPase which binds GTP, GDP and possibly (p)ppGpp with moderate affinity, with high nucleotide exchange rates and a fairly low GTP hydrolysis rate. Plays a role in control of the cell cycle, stress response, ribosome biogenesis and in those bacteria that undergo differentiation, in morphogenesis control. The chain is GTPase Obg from Thermobifida fusca (strain YX).